The following is a 288-amino-acid chain: ATP synthase gamma chain 1 (288 aa).

The protein belongs to the ATPase gamma chain family. As to quaternary structure, F-type ATPases have 2 components, CF(1) - the catalytic core - and CF(0) - the membrane proton channel. CF(1) has five subunits: alpha(3), beta(3), gamma(1), delta(1), epsilon(1). CF(0) has three main subunits: a, b and c.

The protein resides in the cell inner membrane. Functionally, produces ATP from ADP in the presence of a proton gradient across the membrane. The gamma chain is believed to be important in regulating ATPase activity and the flow of protons through the CF(0) complex. In Photobacterium profundum (strain SS9), this protein is ATP synthase gamma chain 1.